Reading from the N-terminus, the 248-residue chain is Large ribosomal subunit protein uL4 (248 aa).

Positions 45 to 105 are disordered; that stretch reads PYGADPYAGM…KDQSKSVNTK (61 aa). The segment covering 92–105 has biased composition (basic and acidic residues); it reads PKAEKDQSKSVNTK.

It belongs to the universal ribosomal protein uL4 family. As to quaternary structure, part of the 50S ribosomal subunit.

Its function is as follows. One of the primary rRNA binding proteins, this protein initially binds near the 5'-end of the 23S rRNA. It is important during the early stages of 50S assembly. It makes multiple contacts with different domains of the 23S rRNA in the assembled 50S subunit and ribosome. Forms part of the polypeptide exit tunnel. The protein is Large ribosomal subunit protein uL4 of Haloquadratum walsbyi (strain DSM 16790 / HBSQ001).